The sequence spans 340 residues: Coproporphyrin III ferrochelatase (340 aa).

Positions 52 and 116 each coordinate Fe-coproporphyrin III. Fe(2+)-binding residues include His-172 and Glu-255.

Belongs to the ferrochelatase family.

It is found in the cytoplasm. It carries out the reaction Fe-coproporphyrin III + 2 H(+) = coproporphyrin III + Fe(2+). Its pathway is porphyrin-containing compound metabolism; protoheme biosynthesis. Its function is as follows. Involved in coproporphyrin-dependent heme b biosynthesis. Catalyzes the insertion of ferrous iron into coproporphyrin III to form Fe-coproporphyrin III. The protein is Coproporphyrin III ferrochelatase of Mycobacterium ulcerans (strain Agy99).